A 1439-amino-acid chain; its full sequence is Fanconi anemia group D2 protein (1439 aa).

Lys563 participates in a covalent cross-link: Glycyl lysine isopeptide (Lys-Gly) (interchain with G-Cter in ubiquitin).

The protein belongs to the Fanconi anemia protein FANCD2 family. In terms of assembly, homodimer; cannot be ubiquitinated and does not bind DNA. Part of a FANCI-FANCD2 heterodimeric complex that binds and scans dsDNA for DNA damage. Interacts directly with FANCE and FANCI. Interacts with USP1 and MEN1. The ubiquitinated form specifically interacts with BRCA1 and BLM. Both the nonubiquitinated and the monoubiquitinated forms interact with BRCA2; this interaction is mediated by phosphorylated FANCG and the complex also includes XCCR3. The ubiquitinated form specifically interacts with MTMR15/FAN1 (via UBZ-type zinc finger), leading to recruit MTMR15/FAN1 to sites of DNA damage. Interacts with DCLRE1B/Apollo. Interacts with POLN. Interacts with UHRF1 and UHRF2; these interactions promote FANCD2 activation. Monoubiquitinated on Lys-563 during S phase and upon genotoxic stress. Deubiquitinated by USP1 as cells enter G2/M, or once DNA repair is completed. Monoubiquitination prevents DNA release from the FANCI-FANCD2 complex. FANCD2 is only ubiquitinated in the FANCI-FANCD2 complex and the monoubiquitination of FANCD2 is promoted by phosphorylation of FANCI. In terms of processing, phosphorylated in response to various genotoxic stresses by ATM and/or ATR.

It localises to the nucleus. Functionally, required for maintenance of chromosomal stability. Promotes accurate and efficient pairing of homologs during meiosis. Involved in the repair of DNA double-strand breaks, both by homologous recombination and single-strand annealing. The FANCI-FANCD2 complex binds and scans double-stranded DNA (dsDNA) for DNA damage; this complex stalls at DNA junctions between double-stranded DNA and single-stranded DNA. May participate in S phase and G2 phase checkpoint activation upon DNA damage. Plays a role in preventing breakage and loss of missegregating chromatin at the end of cell division, particularly after replication stress. Required for the targeting, or stabilization, of BLM to non-centromeric abnormal structures induced by replicative stress. Promotes BRCA2/FANCD1 loading onto damaged chromatin. May also be involved in B-cell immunoglobulin isotype switching. This is Fanconi anemia group D2 protein from Gallus gallus (Chicken).